A 1273-amino-acid polypeptide reads, in one-letter code: Kinesin-like protein KIN-14A (1273 aa).

The segment at 1–52 (MADQRSKTNRWNWEVSGFEPRKSSSNASFAESTGHRTTGPLLRRNSISTPSL) is disordered. The stretch at 59–89 (ASKVNGLKEKVKLAKEDYLELRQEATDLQEY) forms a coiled coil. Residues 142–456 (NIKVFCRARP…LNYAARARNT (315 aa)) enclose the Kinesin motor domain. 223-230 (GQTNAGKT) is a binding site for ATP. Coiled coils occupy residues 466 to 511 (IKKW…CVLL), 559 to 595 (QLDQ…AVRS), and 627 to 657 (TKKL…RLTE). Disordered stretches follow at residues 827-847 (KPNT…RSPV) and 1136-1157 (QEDT…SISS). Positions 830–846 (TGRSKSTSRGSSPGRSP) are enriched in low complexity.

It belongs to the TRAFAC class myosin-kinesin ATPase superfamily. Kinesin family. KIN-14 subfamily. Homodimer and heterodimer with KCA2. Interacts with CDKA-1. Interacts with AL1, a geminivirus (TGMV) protein essential for viral replication. Interacts with LUE1/KSS. Post-translationally, part of the phosphorylation is not CDK-dependent. Widely expressed.

Its subcellular location is the nucleus. It localises to the cytoplasm. The protein localises to the cytoskeleton. It is found in the spindle. The protein resides in the chromosome. Its subcellular location is the cell membrane. It localises to the phragmoplast. Kinesin-like protein required for chloroplast movements and anchor to the plasma membrane. Mediates chloroplast movement via chloroplast actin (cp-actin) filaments. Required for the chloroplast avoidance response under high intensity blue light. Mediates redundantly with CHUP1 the nuclear avoidance response under high intensity blue light. May act as a mitotic kinesin. Probably involved in division plane determination. In Arabidopsis thaliana (Mouse-ear cress), this protein is Kinesin-like protein KIN-14A.